The chain runs to 115 residues: NADH-ubiquinone oxidoreductase chain 3 (115 aa).

Helical transmembrane passes span alanine 4–leucine 24, phenylalanine 55–leucine 75, and leucine 84–tyrosine 104.

Belongs to the complex I subunit 3 family. In terms of assembly, core subunit of respiratory chain NADH dehydrogenase (Complex I) which is composed of 45 different subunits. Interacts with TMEM186. Interacts with TMEM242.

The protein resides in the mitochondrion inner membrane. The enzyme catalyses a ubiquinone + NADH + 5 H(+)(in) = a ubiquinol + NAD(+) + 4 H(+)(out). In terms of biological role, core subunit of the mitochondrial membrane respiratory chain NADH dehydrogenase (Complex I) which catalyzes electron transfer from NADH through the respiratory chain, using ubiquinone as an electron acceptor. Essential for the catalytic activity of complex I. The polypeptide is NADH-ubiquinone oxidoreductase chain 3 (Phoca vitulina (Harbor seal)).